The primary structure comprises 188 residues: Elongation factor P (188 aa).

This sequence belongs to the elongation factor P family.

The protein resides in the cytoplasm. Its pathway is protein biosynthesis; polypeptide chain elongation. In terms of biological role, involved in peptide bond synthesis. Stimulates efficient translation and peptide-bond synthesis on native or reconstituted 70S ribosomes in vitro. Probably functions indirectly by altering the affinity of the ribosome for aminoacyl-tRNA, thus increasing their reactivity as acceptors for peptidyl transferase. This is Elongation factor P from Gluconacetobacter diazotrophicus (strain ATCC 49037 / DSM 5601 / CCUG 37298 / CIP 103539 / LMG 7603 / PAl5).